Reading from the N-terminus, the 47-residue chain is Putative protein PinH (47 aa).

The Resolvase/invertase-type recombinase catalytic domain occupies 1–47 (MWHLVVLLEELCERGINFRALAQSIFAQQWGDECCKSKTICDLKVIV).

The protein belongs to the site-specific recombinase resolvase family.

This Escherichia coli (strain K12) protein is Putative protein PinH (pinH).